Reading from the N-terminus, the 295-residue chain is ATP synthase gamma chain (295 aa).

It belongs to the ATPase gamma chain family. In terms of assembly, F-type ATPases have 2 components, CF(1) - the catalytic core - and CF(0) - the membrane proton channel. CF(1) has five subunits: alpha(3), beta(3), gamma(1), delta(1), epsilon(1). CF(0) has three main subunits: a, b and c.

Its subcellular location is the cell inner membrane. Its function is as follows. Produces ATP from ADP in the presence of a proton gradient across the membrane. The gamma chain is believed to be important in regulating ATPase activity and the flow of protons through the CF(0) complex. The chain is ATP synthase gamma chain from Campylobacter fetus subsp. fetus (strain 82-40).